A 72-amino-acid chain; its full sequence is Crustacean hyperglycemic hormone A (72 aa).

Residue Gln-1 is modified to Pyrrolidone carboxylic acid. Phe-3 is modified (D-phenylalanine; in form CHHA-II). Intrachain disulfides connect Cys-7-Cys-43, Cys-23-Cys-39, and Cys-26-Cys-52. A Valine amide modification is found at Val-72.

Post-translationally, stereoinversion of L-Phe (in CHHA-I) to D-Phe (in CHHA-II).

The protein resides in the secreted. Hormone found in the sinus gland of isopods and decapods which controls the blood sugar level. Has a secretagogue action over the amylase released from the midgut gland. May act as a stress hormone and may be involved in the control of molting and reproduction. The chain is Crustacean hyperglycemic hormone A from Cherax destructor (Common yabby crayfish).